The primary structure comprises 267 residues: MAPAADREGYWGPTTSTLDWCEENYSVTWYIAEFWNTVSNLIMIIPPMFGAVQSVRDGLEKRYIASYLALTVVGMGSWCFHMTLKYEMQLLDELPMIYSCCIFVYCMFECFKIKNSVNYHLLFTLVLFSLIVTTVYLKVKEPIFHQVMYGMLVFTLVLRSIYIVTWVYPWLRGLGYTSLGIFLLGFLFWNIDNIFCESLRNFRKKVPPIIGITTQFHAWWHILTGLGSYLHILFSLYTRTLYLRYRPKVKFLFGIWPVILFEPLRKH.

Topologically, residues 1-33 are cytoplasmic; that stretch reads MAPAADREGYWGPTTSTLDWCEENYSVTWYIAE. Ca(2+)-binding residues include aspartate 19, tryptophan 20, glutamate 22, asparagine 24, and glutamate 33. The chain crosses the membrane as a helical span at residues 34-55; it reads FWNTVSNLIMIIPPMFGAVQSV. The Lumenal segment spans residues 56–61; that stretch reads RDGLEK. Residues 62 to 82 form a helical membrane-spanning segment; the sequence is RYIASYLALTVVGMGSWCFHM. Zn(2+) is bound at residue histidine 81. The Cytoplasmic portion of the chain corresponds to 83-87; sequence TLKYE. Residues 88 to 108 traverse the membrane as a helical segment; that stretch reads MQLLDELPMIYSCCIFVYCMF. Over 109–118 the chain is Lumenal; it reads ECFKIKNSVN. Residues 119-139 traverse the membrane as a helical segment; the sequence is YHLLFTLVLFSLIVTTVYLKV. At 140 to 141 the chain is on the cytoplasmic side; the sequence is KE. Residues 142–162 form a helical membrane-spanning segment; that stretch reads PIFHQVMYGMLVFTLVLRSIY. Over 163–173 the chain is Lumenal; it reads IVTWVYPWLRG. Residues 174 to 194 form a helical membrane-spanning segment; sequence LGYTSLGIFLLGFLFWNIDNI. Over 195-215 the chain is Cytoplasmic; sequence FCESLRNFRKKVPPIIGITTQ. The helical transmembrane segment at 216-236 threads the bilayer; that stretch reads FHAWWHILTGLGSYLHILFSL. Residues histidine 217 and histidine 221 each contribute to the Zn(2+) site. Topologically, residues 237–267 are lumenal; it reads YTRTLYLRYRPKVKFLFGIWPVILFEPLRKH.

Belongs to the alkaline ceramidase family. The cofactor is Zn(2+). As to expression, ubiquitously expressed. Highly expressed in placenta. Expressed in erythrocytes.

The protein resides in the endoplasmic reticulum membrane. The protein localises to the golgi apparatus membrane. It catalyses the reaction an N-acyl-(4R)-4-hydroxysphinganine + H2O = (4R)-hydroxysphinganine + a fatty acid. The catalysed reaction is N-(5Z,8Z,11Z,14Z-eicosatetraenoyl)-sphing-4-enine + H2O = sphing-4-enine + (5Z,8Z,11Z,14Z)-eicosatetraenoate. The enzyme catalyses N-(5Z,8Z,11Z,14Z-eicosatetraenoyl)-sphinganine + H2O = sphinganine + (5Z,8Z,11Z,14Z)-eicosatetraenoate. It carries out the reaction N-(5Z,8Z,11Z,14Z-eicosatetraenoyl)-(4R)-hydroxysphinganine + H2O = (4R)-hydroxysphinganine + (5Z,8Z,11Z,14Z)-eicosatetraenoate. It catalyses the reaction N-(11Z-eicosenoyl)-sphing-4-enine + H2O = (11Z)-eicosenoate + sphing-4-enine. The catalysed reaction is N-(11Z-eicosenoyl)-sphinganine + H2O = (11Z)-eicosenoate + sphinganine. The enzyme catalyses N-(11Z-eicosenoyl)-(4R)-hydroxysphinganine + H2O = (11Z)-eicosenoate + (4R)-hydroxysphinganine. It carries out the reaction N-(9Z-octadecenoyl)-sphing-4-enine + H2O = sphing-4-enine + (9Z)-octadecenoate. It catalyses the reaction N-(9Z-octadecenoyl)-sphinganine + H2O = sphinganine + (9Z)-octadecenoate. The catalysed reaction is N-(9Z-octadecenoyl)-(4R)-hydroxysphinganine + H2O = (4R)-hydroxysphinganine + (9Z)-octadecenoate. The enzyme catalyses an N-acylsphing-4-enine + H2O = sphing-4-enine + a fatty acid. It carries out the reaction an N-acylsphinganine + H2O = sphinganine + a fatty acid. The protein operates within lipid metabolism; sphingolipid metabolism. With respect to regulation, activated by 5 mM Ca(2+) and inhibited by 5 mM Zn(2+). Its function is as follows. Endoplasmic reticulum and Golgi ceramidase that catalyzes the hydrolysis of unsaturated long-chain C18:1-, C20:1- and C20:4-ceramides, dihydroceramides and phytoceramides into sphingoid bases like sphingosine and free fatty acids at alkaline pH. Ceramides, sphingosine, and its phosphorylated form sphingosine-1-phosphate are bioactive lipids that mediate cellular signaling pathways regulating several biological processes including cell proliferation, apoptosis and differentiation. Controls the generation of sphingosine in erythrocytes, and thereby sphingosine-1-phosphate in plasma. Through the regulation of ceramides and sphingosine-1-phosphate homeostasis in the brain may play a role in neurons survival and function. By regulating the levels of pro-inflammatory ceramides in immune cells and tissues, may modulate the inflammatory response. The protein is Alkaline ceramidase 3 (ACER3) of Homo sapiens (Human).